A 94-amino-acid polypeptide reads, in one-letter code: Protein RESPONSE TO LOW SULFUR 1 (94 aa).

Residues 8-35 (VTVAAEEMDELRRRNIELSREVAEMKTE) adopt a coiled-coil conformation.

This chain is Protein RESPONSE TO LOW SULFUR 1, found in Arabidopsis thaliana (Mouse-ear cress).